Consider the following 585-residue polypeptide: MLTDMDISSRASLKNITEIGADLGLLPEEMMLFGHTKAKVELSVLQRLAGQRKGKLIIVTAVTPTPHGEGKTVTSIGLTQSLNAIGQKACACIRQPSMGPVFGVKGGAAGGGYAQVVPMQEMNLHLTGDIHAVSSAHNLGAAAIAARLFHETRLGKTEFEAQSEQAFLDIDPNEIRWHRVVDHNDRCLRQIHVGLGDNNGPEYESSFDITAASELMAILALSHDLADMRARIGRLVLALNTQGQVITAEDLGVAGAMTAIMADAIKPTLMQTLNGSPCLIHSGPFANIAHGNSSIIADDIALRLADFVVTEGGFGSDMGFEKFCNIKVRQSGQAPAAAVLVTTLKALKANSGLATEVDSNVSNIHVPNISATNINAPDQARLEAGFANLNWHINNVARYGIPVVVAINRFATDSDAELQWLIEAVNASAAFGCEISDAFIQGEAGAIALAQTVVRAAETESQFKLLYPDEASLEAKLSTLAEVGYGATGVSLSIEAKQQAQQLTALGYGHLPLCMAKTPLSISHDPSLKGVPKDFVVPVRELVLHAGAGFITALVGNVMTMPGLGLKPGYLKIDIDAKGEIVGLG.

Threonine 65 to threonine 72 lines the ATP pocket.

This sequence belongs to the formate--tetrahydrofolate ligase family.

The catalysed reaction is (6S)-5,6,7,8-tetrahydrofolate + formate + ATP = (6R)-10-formyltetrahydrofolate + ADP + phosphate. It functions in the pathway one-carbon metabolism; tetrahydrofolate interconversion. This Shewanella baltica (strain OS155 / ATCC BAA-1091) protein is Formate--tetrahydrofolate ligase.